The primary structure comprises 339 residues: Glycerol-3-phosphate dehydrogenase [NAD(P)+] (339 aa).

Ser15, Tyr16, His36, and Lys110 together coordinate NADPH. Sn-glycerol 3-phosphate contacts are provided by Lys110, Gly139, and Thr141. Ala143 serves as a coordination point for NADPH. Sn-glycerol 3-phosphate is bound by residues Lys195, Asp248, Ser258, Arg259, and Asn260. Lys195 functions as the Proton acceptor in the catalytic mechanism. Residue Arg259 coordinates NADPH. NADPH-binding residues include Val283 and Glu285.

This sequence belongs to the NAD-dependent glycerol-3-phosphate dehydrogenase family.

It localises to the cytoplasm. It carries out the reaction sn-glycerol 3-phosphate + NAD(+) = dihydroxyacetone phosphate + NADH + H(+). The enzyme catalyses sn-glycerol 3-phosphate + NADP(+) = dihydroxyacetone phosphate + NADPH + H(+). It functions in the pathway membrane lipid metabolism; glycerophospholipid metabolism. Its function is as follows. Catalyzes the reduction of the glycolytic intermediate dihydroxyacetone phosphate (DHAP) to sn-glycerol 3-phosphate (G3P), the key precursor for phospholipid synthesis. The chain is Glycerol-3-phosphate dehydrogenase [NAD(P)+] from Escherichia fergusonii (strain ATCC 35469 / DSM 13698 / CCUG 18766 / IAM 14443 / JCM 21226 / LMG 7866 / NBRC 102419 / NCTC 12128 / CDC 0568-73).